Here is a 313-residue protein sequence, read N- to C-terminus: Acetyl-coenzyme A carboxylase carboxyl transferase subunit alpha (313 aa).

The region spanning 42–292 is the CoA carboxyltransferase C-terminal domain; that stretch reads KSDKLLRDTY…GAAIGEELDK (251 aa).

Belongs to the AccA family. In terms of assembly, acetyl-CoA carboxylase is a heterohexamer composed of biotin carboxyl carrier protein (AccB), biotin carboxylase (AccC) and two subunits each of ACCase subunit alpha (AccA) and ACCase subunit beta (AccD).

The protein localises to the cytoplasm. The enzyme catalyses N(6)-carboxybiotinyl-L-lysyl-[protein] + acetyl-CoA = N(6)-biotinyl-L-lysyl-[protein] + malonyl-CoA. Its pathway is lipid metabolism; malonyl-CoA biosynthesis; malonyl-CoA from acetyl-CoA: step 1/1. Component of the acetyl coenzyme A carboxylase (ACC) complex. First, biotin carboxylase catalyzes the carboxylation of biotin on its carrier protein (BCCP) and then the CO(2) group is transferred by the carboxyltransferase to acetyl-CoA to form malonyl-CoA. This is Acetyl-coenzyme A carboxylase carboxyl transferase subunit alpha from Rhizorhabdus wittichii (strain DSM 6014 / CCUG 31198 / JCM 15750 / NBRC 105917 / EY 4224 / RW1) (Sphingomonas wittichii).